The sequence spans 191 residues: Small ribosomal subunit protein uS7 (191 aa).

Belongs to the universal ribosomal protein uS7 family. As to quaternary structure, part of the 30S ribosomal subunit.

Its function is as follows. One of the primary rRNA binding proteins, it binds directly to 16S rRNA where it nucleates assembly of the head domain of the 30S subunit. Is located at the subunit interface close to the decoding center. The sequence is that of Small ribosomal subunit protein uS7 from Methanocaldococcus jannaschii (strain ATCC 43067 / DSM 2661 / JAL-1 / JCM 10045 / NBRC 100440) (Methanococcus jannaschii).